A 317-amino-acid polypeptide reads, in one-letter code: Transaldolase (317 aa).

Residue K132 is the Schiff-base intermediate with substrate of the active site.

It belongs to the transaldolase family. Type 1 subfamily. In terms of assembly, homodimer.

The protein localises to the cytoplasm. It carries out the reaction D-sedoheptulose 7-phosphate + D-glyceraldehyde 3-phosphate = D-erythrose 4-phosphate + beta-D-fructose 6-phosphate. It functions in the pathway carbohydrate degradation; pentose phosphate pathway; D-glyceraldehyde 3-phosphate and beta-D-fructose 6-phosphate from D-ribose 5-phosphate and D-xylulose 5-phosphate (non-oxidative stage): step 2/3. Its function is as follows. Transaldolase is important for the balance of metabolites in the pentose-phosphate pathway. In Shigella dysenteriae serotype 1 (strain Sd197), this protein is Transaldolase.